Consider the following 309-residue polypeptide: Malonyl CoA-acyl carrier protein transacylase (309 aa).

Residues serine 92 and histidine 201 contribute to the active site.

Belongs to the FabD family.

The enzyme catalyses holo-[ACP] + malonyl-CoA = malonyl-[ACP] + CoA. It functions in the pathway lipid metabolism; fatty acid biosynthesis. This chain is Malonyl CoA-acyl carrier protein transacylase (fabD), found in Escherichia coli O157:H7.